Consider the following 257-residue polypeptide: Nickel import system ATP-binding protein NikD (257 aa).

Residues 4–245 (IDIQNLTIKN…HLHPYTEQLI (242 aa)) enclose the ABC transporter domain. 37–44 (GESGAGKS) is a binding site for ATP.

This sequence belongs to the ABC transporter superfamily. The complex is composed of two ATP-binding proteins (NikD and NikE), two transmembrane proteins (NikB and NikC) and a solute-binding protein (NikA).

The protein localises to the cell membrane. It carries out the reaction Ni(2+)(out) + ATP + H2O = Ni(2+)(in) + ADP + phosphate + H(+). Functionally, part of the ABC transporter complex NikABCDE (Opp2) involved in nickel import. Probably responsible for energy coupling to the transport system. In Staphylococcus aureus (strain bovine RF122 / ET3-1), this protein is Nickel import system ATP-binding protein NikD.